The following is a 149-amino-acid chain: Cytochrome c-type biogenesis protein CcmE (149 aa).

Residues 1 to 7 lie on the Cytoplasmic side of the membrane; sequence MKKRHQR. The chain crosses the membrane as a helical; Signal-anchor for type II membrane protein span at residues 8–28; sequence LFLVLGVVAGVSVATALVLNA. Residues 29–149 are Periplasmic-facing; it reads FRDNMTFFIT…EHSVDEVGDY (121 aa). Residues H123 and Y127 each contribute to the heme site.

It belongs to the CcmE/CycJ family.

The protein resides in the cell inner membrane. In terms of biological role, heme chaperone required for the biogenesis of c-type cytochromes. Transiently binds heme delivered by CcmC and transfers the heme to apo-cytochromes in a process facilitated by CcmF and CcmH. The protein is Cytochrome c-type biogenesis protein CcmE of Halorhodospira halophila (strain DSM 244 / SL1) (Ectothiorhodospira halophila (strain DSM 244 / SL1)).